The sequence spans 261 residues: 5'-nucleotidase SurE (261 aa).

The a divalent metal cation site is built by D8, D9, S40, and N94.

The protein belongs to the SurE nucleotidase family. Requires a divalent metal cation as cofactor.

The protein localises to the cytoplasm. It carries out the reaction a ribonucleoside 5'-phosphate + H2O = a ribonucleoside + phosphate. Nucleotidase that shows phosphatase activity on nucleoside 5'-monophosphates. The sequence is that of 5'-nucleotidase SurE from Anaplasma marginale (strain Florida).